A 604-amino-acid polypeptide reads, in one-letter code: Elongation factor 4 1 (604 aa).

The 182-residue stretch at 10–191 (EHIRNFCIIA…AIVDSVPAPT (182 aa)) folds into the tr-type G domain. GTP contacts are provided by residues 22–27 (DHGKST) and 138–141 (NKID).

The protein belongs to the TRAFAC class translation factor GTPase superfamily. Classic translation factor GTPase family. LepA subfamily.

Its subcellular location is the cell inner membrane. The enzyme catalyses GTP + H2O = GDP + phosphate + H(+). In terms of biological role, required for accurate and efficient protein synthesis under certain stress conditions. May act as a fidelity factor of the translation reaction, by catalyzing a one-codon backward translocation of tRNAs on improperly translocated ribosomes. Back-translocation proceeds from a post-translocation (POST) complex to a pre-translocation (PRE) complex, thus giving elongation factor G a second chance to translocate the tRNAs correctly. Binds to ribosomes in a GTP-dependent manner. The chain is Elongation factor 4 1 from Rhodopirellula baltica (strain DSM 10527 / NCIMB 13988 / SH1).